A 151-amino-acid polypeptide reads, in one-letter code: Deoxyuridine 5'-triphosphate nucleotidohydrolase (151 aa).

Substrate is bound by residues 70-72 (RSG), asparagine 83, 87-89 (LID), and methionine 97.

The protein belongs to the dUTPase family. Mg(2+) is required as a cofactor.

It carries out the reaction dUTP + H2O = dUMP + diphosphate + H(+). It participates in pyrimidine metabolism; dUMP biosynthesis; dUMP from dCTP (dUTP route): step 2/2. This enzyme is involved in nucleotide metabolism: it produces dUMP, the immediate precursor of thymidine nucleotides and it decreases the intracellular concentration of dUTP so that uracil cannot be incorporated into DNA. This is Deoxyuridine 5'-triphosphate nucleotidohydrolase from Pseudomonas aeruginosa (strain UCBPP-PA14).